The chain runs to 330 residues: DNA-directed RNA polymerase subunit alpha (330 aa).

The segment at 1 to 236 (MQGSVTEFLK…EQLDAFVDLR (236 aa)) is alpha N-terminal domain (alpha-NTD). The segment at 250 to 330 (FDPILLRPVD…NWPPASIAED (81 aa)) is alpha C-terminal domain (alpha-CTD).

This sequence belongs to the RNA polymerase alpha chain family. Homodimer. The RNAP catalytic core consists of 2 alpha, 1 beta, 1 beta' and 1 omega subunit. When a sigma factor is associated with the core the holoenzyme is formed, which can initiate transcription.

It catalyses the reaction RNA(n) + a ribonucleoside 5'-triphosphate = RNA(n+1) + diphosphate. DNA-dependent RNA polymerase catalyzes the transcription of DNA into RNA using the four ribonucleoside triphosphates as substrates. The polypeptide is DNA-directed RNA polymerase subunit alpha (Vibrio vulnificus (strain CMCP6)).